Here is a 304-residue protein sequence, read N- to C-terminus: Small glutamine-rich tetratricopeptide repeat-containing protein beta (304 aa).

TPR repeat units lie at residues 15 to 49 (LREQSQMDTYTSDEQESLEVAIQCLETVFKISPED), 85 to 118 (ADQLKDEGNNHMKEENYAAAVDCYTQAIELDPNN), 119 to 152 (AVYYCNRAAAQSKLGHYTDAIKDCEKAIAIDSKY), and 153 to 186 (SKAYGRMGLALTALNKFEEAVTSYQKALDLDPEN). Lys131 carries the N6-acetyllysine modification. Residues Ser293, Ser295, and Ser297 each carry the phosphoserine modification.

It belongs to the SGT family. Homooligomerize.

In terms of biological role, co-chaperone that binds directly to HSC70 and HSP70 and regulates their ATPase activity. The sequence is that of Small glutamine-rich tetratricopeptide repeat-containing protein beta (SGTB) from Homo sapiens (Human).